Here is a 361-residue protein sequence, read N- to C-terminus: MNKLALYCRAGFEKETAGEITDKAAQLGVFGFVNLKENSGYIIFECYQAGDADRLARELKFEQLIFARQMIVVGDMLQDLPVEDRISPIVAQYQALNPRHSSDIFVETPDTNEAKELLTFCRKFTVPLRNSLKKQGWLTKSERAKGSIGLHILFVRPGCCYVGYAYNDNKSPFFMGIPRLKFPAEAPSRSTLKLEEAILTFIPEAEEKKRFTDEMTGVDLGACPGGWTYQLVKRGVFVYAVDHGKMAASLHETGRIEHCPEDGFKFQPPKRKTIDWLVCDMVEQPMRISKLIGKWLINGWCRETIFNLKLPMKKRYQEVQLCLAYLEEELEKQGFWFKIQAKHLYHDREEITVHIAVMGKR.

S-adenosyl-L-methionine-binding positions include serine 190, 223-226 (CPGG), aspartate 242, aspartate 262, and aspartate 280. Lysine 309 acts as the Proton acceptor in catalysis.

This sequence belongs to the class I-like SAM-binding methyltransferase superfamily. RNA methyltransferase RlmE family. RlmM subfamily. In terms of assembly, monomer.

Its subcellular location is the cytoplasm. It carries out the reaction cytidine(2498) in 23S rRNA + S-adenosyl-L-methionine = 2'-O-methylcytidine(2498) in 23S rRNA + S-adenosyl-L-homocysteine + H(+). Catalyzes the 2'-O-methylation at nucleotide C2498 in 23S rRNA. This Actinobacillus pleuropneumoniae serotype 7 (strain AP76) protein is Ribosomal RNA large subunit methyltransferase M.